We begin with the raw amino-acid sequence, 376 residues long: Phytanoyl-CoA hydroxylase interacting protein-like (376 aa).

Phosphoserine occurs at positions 12 and 15. Residue Asn-23 is glycosylated (N-linked (GlcNAc...) asparagine). Ser-25 is subject to Phosphoserine. Residue Asn-37 is glycosylated (N-linked (GlcNAc...) asparagine). One can recognise a Fibronectin type-III domain in the interval 52 to 161 (VPRNIKISNI…EIIEFCTADY (110 aa)).

Belongs to the PHYHIP family.

Functionally, may play a role in the development of the central system. This chain is Phytanoyl-CoA hydroxylase interacting protein-like (PHYHIPL), found in Bos taurus (Bovine).